Here is a 782-residue protein sequence, read N- to C-terminus: uncharacterized protein (782 aa).

Residues Leu10–Tyr30 form a helical membrane-spanning segment. The segment covering Leu57–Lys76 has biased composition (basic and acidic residues). Positions Leu57 to Ser171 are disordered. Positions Pro77–Pro97 are enriched in pro residues. Basic and acidic residues predominate over residues Pro98–Pro124. Residues Glu125–Glu135 are compositionally biased toward pro residues.

This sequence to U.parvum UU046.

Its subcellular location is the membrane. This is an uncharacterized protein from Ureaplasma parvum serovar 3 (strain ATCC 700970).